The following is a 145-amino-acid chain: Acidic phospholipase A2 (145 aa).

The signal sequence occupies residues 1-19; sequence MNPAHLLILSAVCVSLLGA. Positions 20–27 are excised as a propeptide; that stretch reads ANVPPQHL. 7 disulfides stabilise this stretch: Cys38/Cys97, Cys52/Cys144, Cys54/Cys70, Cys69/Cys125, Cys76/Cys118, Cys86/Cys111, and Cys104/Cys116. Ca(2+)-binding residues include Tyr53, Gly55, and Gly57. His73 is an active-site residue. Asp74 contacts Ca(2+). Asp119 is a catalytic residue.

It belongs to the phospholipase A2 family. Group I subfamily. D49 sub-subfamily. Ca(2+) serves as cofactor. As to expression, expressed by the venom gland.

The protein localises to the secreted. The catalysed reaction is a 1,2-diacyl-sn-glycero-3-phosphocholine + H2O = a 1-acyl-sn-glycero-3-phosphocholine + a fatty acid + H(+). PLA2 catalyzes the calcium-dependent hydrolysis of the 2-acyl groups in 3-sn-phosphoglycerides. In Bungarus multicinctus (Many-banded krait), this protein is Acidic phospholipase A2.